The primary structure comprises 545 residues: Thermosome subunit (545 aa).

It belongs to the TCP-1 chaperonin family. In terms of assembly, forms an oligomeric complex of eight-membered rings.

Molecular chaperone; binds unfolded polypeptides in vitro, and has a weak ATPase activity. In Desulfurococcus sp. (strain SY), this protein is Thermosome subunit (ths).